A 220-amino-acid chain; its full sequence is Chaperone protein TorD (220 aa).

It belongs to the TorD/DmsD family. TorD subfamily.

Its subcellular location is the cytoplasm. Involved in the biogenesis of TorA. Acts on TorA before the insertion of the molybdenum cofactor and, as a result, probably favors a conformation of the apoenzyme that is competent for acquiring the cofactor. The chain is Chaperone protein TorD from Vibrio cholerae serotype O1 (strain M66-2).